The sequence spans 242 residues: Segregation and condensation protein A (242 aa).

Belongs to the ScpA family. As to quaternary structure, component of a cohesin-like complex composed of ScpA, ScpB and the Smc homodimer, in which ScpA and ScpB bind to the head domain of Smc. The presence of the three proteins is required for the association of the complex with DNA.

It localises to the cytoplasm. Functionally, participates in chromosomal partition during cell division. May act via the formation of a condensin-like complex containing Smc and ScpB that pull DNA away from mid-cell into both cell halves. This Streptococcus pneumoniae (strain Taiwan19F-14) protein is Segregation and condensation protein A.